The chain runs to 332 residues: Ribosomal RNA small subunit methyltransferase H (332 aa).

S-adenosyl-L-methionine-binding positions include 36–38 (GGY), Asp-54, Phe-81, Asp-102, and Gln-109.

The protein belongs to the methyltransferase superfamily. RsmH family.

It localises to the cytoplasm. The enzyme catalyses cytidine(1402) in 16S rRNA + S-adenosyl-L-methionine = N(4)-methylcytidine(1402) in 16S rRNA + S-adenosyl-L-homocysteine + H(+). In terms of biological role, specifically methylates the N4 position of cytidine in position 1402 (C1402) of 16S rRNA. In Nitrobacter winogradskyi (strain ATCC 25391 / DSM 10237 / CIP 104748 / NCIMB 11846 / Nb-255), this protein is Ribosomal RNA small subunit methyltransferase H.